The chain runs to 772 residues: Probable beta-glucosidase M (772 aa).

The first 20 residues, 1 to 20 (MLTSWGKTGFVLALALGGRA), serve as a signal peptide directing secretion. Residue asparagine 259 is glycosylated (N-linked (GlcNAc...) asparagine). Residue aspartate 287 is part of the active site. Asparagine 315, asparagine 322, asparagine 438, asparagine 523, asparagine 547, asparagine 574, and asparagine 586 each carry an N-linked (GlcNAc...) asparagine glycan.

The protein belongs to the glycosyl hydrolase 3 family.

The protein resides in the secreted. It carries out the reaction Hydrolysis of terminal, non-reducing beta-D-glucosyl residues with release of beta-D-glucose.. The protein operates within glycan metabolism; cellulose degradation. Functionally, beta-glucosidases are one of a number of cellulolytic enzymes involved in the degradation of cellulosic biomass. Catalyzes the last step releasing glucose from the inhibitory cellobiose. This is Probable beta-glucosidase M (bglM) from Emericella nidulans (strain FGSC A4 / ATCC 38163 / CBS 112.46 / NRRL 194 / M139) (Aspergillus nidulans).